Here is a 269-residue protein sequence, read N- to C-terminus: Indole-3-glycerol phosphate synthase (269 aa).

Belongs to the TrpC family.

It carries out the reaction 1-(2-carboxyphenylamino)-1-deoxy-D-ribulose 5-phosphate + H(+) = (1S,2R)-1-C-(indol-3-yl)glycerol 3-phosphate + CO2 + H2O. The protein operates within amino-acid biosynthesis; L-tryptophan biosynthesis; L-tryptophan from chorismate: step 4/5. This chain is Indole-3-glycerol phosphate synthase, found in Saccharopolyspora erythraea (strain ATCC 11635 / DSM 40517 / JCM 4748 / NBRC 13426 / NCIMB 8594 / NRRL 2338).